The chain runs to 35 residues: Photosystem II reaction center protein Y (35 aa).

Topologically, residues 1–4 (MDTR) are lumenal. The helical transmembrane segment at 5–23 (LLIVLLPIIAAASWAIYNI) threads the bilayer. Topologically, residues 24 to 35 (GKILLLQLTKRS) are stromal.

It belongs to the PsbY family. PSII is composed of 1 copy each of membrane proteins PsbA, PsbB, PsbC, PsbD, PsbE, PsbF, PsbH, PsbI, PsbJ, PsbK, PsbL, PsbM, PsbT, PsbX, PsbY, PsbZ, Psb30/Ycf12, at least 3 peripheral proteins of the oxygen-evolving complex and a large number of cofactors. It forms dimeric complexes.

It is found in the plastid. It localises to the chloroplast thylakoid membrane. Functionally, loosely associated component of the core of photosystem II (PSII), it is not always seen in crystals. PSII is a light-driven water plastoquinone oxidoreductase, using light energy to abstract electrons from H(2)O, generating a proton gradient subsequently used for ATP formation. The polypeptide is Photosystem II reaction center protein Y (Cyanidioschyzon merolae (strain NIES-3377 / 10D) (Unicellular red alga)).